Reading from the N-terminus, the 316-residue chain is tRNA dimethylallyltransferase (316 aa).

17 to 24 is a binding site for ATP; it reads GPTASGKT. Residue 19 to 24 coordinates substrate; sequence TASGKT. Interaction with substrate tRNA regions lie at residues 42–45, 166–170, 247–252, and 280–287; these read DSAL, QRLSR, RCVGYR, and KRQITWLR.

Belongs to the IPP transferase family. As to quaternary structure, monomer. The cofactor is Mg(2+).

It carries out the reaction adenosine(37) in tRNA + dimethylallyl diphosphate = N(6)-dimethylallyladenosine(37) in tRNA + diphosphate. Functionally, catalyzes the transfer of a dimethylallyl group onto the adenine at position 37 in tRNAs that read codons beginning with uridine, leading to the formation of N6-(dimethylallyl)adenosine (i(6)A). This Shigella dysenteriae serotype 1 (strain Sd197) protein is tRNA dimethylallyltransferase.